The primary structure comprises 621 residues: Chaperone protein HscA homolog (621 aa).

Belongs to the heat shock protein 70 family.

Its function is as follows. Chaperone involved in the maturation of iron-sulfur cluster-containing proteins. Has a low intrinsic ATPase activity which is markedly stimulated by HscB. This chain is Chaperone protein HscA homolog, found in Polynucleobacter necessarius subsp. necessarius (strain STIR1).